A 189-amino-acid polypeptide reads, in one-letter code: Cell division protein SepF (189 aa).

Residues F152–N163 are compositionally biased toward polar residues. The segment at F152 to I189 is disordered.

It belongs to the SepF family. As to quaternary structure, homodimer. Interacts with FtsZ.

The protein localises to the cytoplasm. Its function is as follows. Cell division protein that is part of the divisome complex and is recruited early to the Z-ring. Probably stimulates Z-ring formation, perhaps through the cross-linking of FtsZ protofilaments. Its function overlaps with FtsA. This is Cell division protein SepF from Prochlorococcus marinus (strain SARG / CCMP1375 / SS120).